The chain runs to 878 residues: MAAAEQSAEQFRGQARLPGFAAPRRYDLRLVPDLDGCAFTGSVDVSVDVTAPTRFLVLNAAELEVSPGGVQFKPHGAEQELHPAEVTNVPEDEILIIRFNEVLPVGEGTLVIAFKGTLNDKMHGFYRSVYELNGEKKNMAVTQFEPADARRCFPCWDEPSFKAIFKITLEVPSETVALSNMPVVEEKVNGLIKAVYFQETPIMSTYLVAVIVGMFDYVEAFTTDGTRVRVYTQVGKSAQGKFALEVAVKTLVLFKEYFAVPYPLPKMDMIAIPDFASGAMENYGLVTYRETALLFDEKHSAAANKQRVAVVVAHELAHQWFGNLVTMEWWTHLWLNEGFATWVSYLAADNFFPEWNVWTQFLEESTTGFKLDALAGSHPIEVDVNHVDEIDEIFDAISYRKGAAVIRMLQSYLGAETFQKSLAAYIEKFAYSNAKTEDLWAALEEGSGEPVKTLMHSWTKQQGYPVVNVKLKDGKLEMEQTQFLSSGAEGVGQWVVPITLCCCSYSRQEKFLFNGKQEDFNLSGLVECQKKEDFWIKLNVNQTGFYRVSYDEELASRLRYAIEANKLSAADRYGVLDDTYALCMAGKQKLVSLLHLIAAYKDETEYTVLARVIDTSLSIVEMVAVAAPEGLGKLKKFLIDFLEPFAQRIGWDAKSGEGHLDALLRGTLLTALAELGHEATINEAVRRFNIFVEDRETPLLPPDVRKAAYVALMQTVNKSNRAGYESLLKIYKETDLSQEKVRILGSLASCPDPDVVRDTLDFMLSPEVRNQDSIFLLRGVGAAGHEVAWTWLKEKWDYISDTFSGTLLTYFVSTTVSPLRTDEMGDDAEEFFKSRTKANIARTVKQSIERVRINAKWVESTRAEANLGNVLKEISHDH.

Residues 105 to 212 (VGEGTLVIAF…MSTYLVAVIV (108 aa)) form a required for membrane association region. Residues Glu145 and 278–282 (GAMEN) each bind substrate. His314 lines the Zn(2+) pocket. Catalysis depends on Glu315, which acts as the Proton acceptor. Zn(2+) contacts are provided by His318 and Glu337. A Dileucine internalization motif motif is present at residues 727–728 (LL).

It belongs to the peptidase M1 family. As to quaternary structure, homodimer. Zn(2+) is required as a cofactor.

The protein localises to the membrane. It is found in the microsome membrane. The protein resides in the cytoplasm. The catalysed reaction is Release of an N-terminal amino acid, Xaa-|-Yaa- from a peptide, amide or arylamide. Xaa is preferably Ala, but may be most amino acids including Pro (slow action). When a terminal hydrophobic residue is followed by a prolyl residue, the two may be released as an intact Xaa-Pro dipeptide.. This is Aminopeptidase M1-A from Oryza sativa subsp. japonica (Rice).